We begin with the raw amino-acid sequence, 543 residues long: CTP synthase (543 aa).

The interval 1–265 (MARYIFITGG…DDEVLAAFGI (265 aa)) is amidoligase domain. Residue S13 participates in CTP binding. S13 provides a ligand contact to UTP. Position 14–19 (14–19 (SLGKGL)) interacts with ATP. Residue Y54 coordinates L-glutamine. D71 contacts ATP. The Mg(2+) site is built by D71 and E139. Residues 146–148 (DIE), 186–191 (KTKPTQ), and K222 each bind CTP. Residues 186-191 (KTKPTQ) and K222 contribute to the UTP site. ATP is bound at residue 238–240 (RDV). A Glutamine amidotransferase type-1 domain is found at 291 to 542 (TIAIVGKYTG…VQAAVVQSRL (252 aa)). L-glutamine is bound at residue G353. C380 serves as the catalytic Nucleophile; for glutamine hydrolysis. L-glutamine is bound by residues 381-384 (FGMQ), E404, and R470. Residues H515 and E517 contribute to the active site.

This sequence belongs to the CTP synthase family. In terms of assembly, homotetramer.

It carries out the reaction UTP + L-glutamine + ATP + H2O = CTP + L-glutamate + ADP + phosphate + 2 H(+). The catalysed reaction is L-glutamine + H2O = L-glutamate + NH4(+). It catalyses the reaction UTP + NH4(+) + ATP = CTP + ADP + phosphate + 2 H(+). Its pathway is pyrimidine metabolism; CTP biosynthesis via de novo pathway; CTP from UDP: step 2/2. Its activity is regulated as follows. Allosterically activated by GTP, when glutamine is the substrate; GTP has no effect on the reaction when ammonia is the substrate. The allosteric effector GTP functions by stabilizing the protein conformation that binds the tetrahedral intermediate(s) formed during glutamine hydrolysis. Inhibited by the product CTP, via allosteric rather than competitive inhibition. In terms of biological role, catalyzes the ATP-dependent amination of UTP to CTP with either L-glutamine or ammonia as the source of nitrogen. Regulates intracellular CTP levels through interactions with the four ribonucleotide triphosphates. The polypeptide is CTP synthase (Rhodopseudomonas palustris (strain BisB18)).